The chain runs to 947 residues: Serine/threonine-protein kinase PKH2 (947 aa).

The segment covering 1–14 has biased composition (basic residues); the sequence is MHKFRYSLHQHYSK. Disordered regions lie at residues 1 to 43, 108 to 132, and 162 to 212; these read MHKF…SSSS, SLGNTTNETGESIAKSAPGTPLSSH, and FNHL…NEEN. The segment covering 108-117 has biased composition (polar residues); that stretch reads SLGNTTNETG. A compositionally biased stretch (acidic residues) spans 187 to 198; it reads NTEEEENNDDTD. Residues 199–212 show a composition bias toward basic and acidic residues; it reads EIPKSETLKQNEEN. The region spanning 240-502 is the Protein kinase domain; that stretch reads FKFGKELGEG…IPEIQKHYFF (263 aa). Residues 250–252 and Lys269 each bind ATP; that span reads SYS. Positions 271–316 are PIF-pocket; sequence LDKRHIIKEKKVKYVNIEKHALNRLSNRLGVISLYFTFQDKDSLYF. ATP contacts are provided by residues 319–321 and Glu325; that span reads DYA. The active-site Proton acceptor is Asp364. Residues Glu368 and Asp382 each coordinate ATP. Low complexity-rich tracts occupy residues 550–579 and 618–632; these read VKKSTNSNSNTNNVATAVGGSSSNGHKGSS and SSTSEDSSKRSSNSN. 4 disordered regions span residues 550 to 598, 611 to 644, 660 to 686, and 794 to 816; these read VKKS…STEK, KPATNQNSSTSEDSSKRSSNSNETRKLSYSQQDY, SVGSYVKTTPSKDRKTLTKVPSNIHQQ, and NMKRSPTSDSKKSMDIERSASTS. Positions 802–811 are enriched in basic and acidic residues; that stretch reads DSKKSMDIER.

It belongs to the protein kinase superfamily. AGC Ser/Thr protein kinase family. PDPK1 subfamily.

The protein localises to the nucleus. It localises to the cytoplasm. It is found in the cell cortex. It catalyses the reaction L-seryl-[protein] + ATP = O-phospho-L-seryl-[protein] + ADP + H(+). It carries out the reaction L-threonyl-[protein] + ATP = O-phospho-L-threonyl-[protein] + ADP + H(+). Its function is as follows. Serine/threonine-protein kinase which is part sphingolipid-mediated signaling pathway that is required for the internalization step of endocytosis by regulating eisosome assembly and organization, and modulating the organization of the plasma membrane. Phosphorylates and activates PKC1. Activates YPK1 and YPK2, 2 components of signaling cascade required for maintenance of cell wall integrity. Required for stress-induced P-body assembly and regulates global mRNA decay at the deadenylation step. The polypeptide is Serine/threonine-protein kinase PKH2 (Candida albicans (strain SC5314 / ATCC MYA-2876) (Yeast)).